The sequence spans 356 residues: Thymidine kinase (356 aa).

The segment at 1 to 29 (MMDSRATYVPPKKISESNSNAEEDPTDCS) is disordered. Position 61-68 (61-68 (GCVGVGKT)) interacts with ATP. Glu-86 serves as the catalytic Proton acceptor. Gln-122 is a substrate binding site. Arg-208 contacts ATP. Arg-214 contacts substrate.

The protein belongs to the herpesviridae thymidine kinase family. Homodimer.

The enzyme catalyses thymidine + ATP = dTMP + ADP + H(+). Its function is as follows. Catalyzes the transfer of the gamma-phospho group of ATP to thymidine to generate dTMP in the salvage pathway of pyrimidine synthesis. The dTMP serves as a substrate for DNA polymerase during viral DNA replication. Allows the virus to be reactivated and to grow in non-proliferative cells lacking a high concentration of phosphorylated nucleic acid precursors. This chain is Thymidine kinase, found in Elephas maximus (Indian elephant).